Reading from the N-terminus, the 147-residue chain is MQDALFFISNNLVLSLIWLFFLILIFFLSTKNMFLKSKIINNFHAINLINQKKAIIVDTRSVELYDSGHIINAINIPFNNICRKTIKKLSLSRSVPIILIIDSLEYNKYIKKFTKYGLDKVYFLKNGMNSWNSENLPTTFKKNIFLK.

In terms of domain architecture, Rhodanese spans 50-140; that stretch reads NQKKAIIVDT…WNSENLPTTF (91 aa).

This is an uncharacterized protein from Buchnera aphidicola subsp. Schizaphis graminum (strain Sg).